The chain runs to 472 residues: Carbohydrate sulfotransferase 3 (472 aa).

Residues 1 to 19 lie on the Cytoplasmic side of the membrane; it reads MEKGLALPQDFRDLVHSLK. Residues 20–38 traverse the membrane as a helical; Signal-anchor for type II membrane protein segment; that stretch reads IRGRYVLFLAFVVIVFIFI. The Lumenal segment spans residues 39–472; that stretch reads EKENKIISRV…LEERGTFWVT (434 aa). 3 N-linked (GlcNAc...) asparagine glycosylation sites follow: N63, N74, and N96. 3'-phosphoadenylyl sulfate is bound at residue 135–141; that stretch reads TRTGSSF. N250 carries an N-linked (GlcNAc...) asparagine glycan. 295–303 lines the 3'-phosphoadenylyl sulfate pocket; it reads RDPRAVLAS. 2 N-linked (GlcNAc...) asparagine glycosylation sites follow: N413 and N457.

This sequence belongs to the sulfotransferase 1 family. Gal/GlcNAc/GalNAc subfamily. In terms of processing, N-glycosylated. As to expression, widely expressed. Highly expressed in spleen, lung, eye and stomach. Constitutively expressed at low level during the mid- to late-gestation period. Expressed in the brain in a temporally controlled manner: peaks at 2 weeks after birth in the cerebellum, but at 3 weeks in the cerebrum. Localizes to stromal cells in the bone marrow, and stromal cells in the marginal zone and red pulp of the spleen, but the sense probe did not.

The protein resides in the golgi apparatus membrane. The enzyme catalyses chondroitin beta-D-glucuronate + n 3'-phosphoadenylyl sulfate = chondroitin 6'-sulfate + n adenosine 3',5'-bisphosphate + n H(+). The catalysed reaction is 3'-phosphoadenylyl sulfate + keratan = adenosine 3',5'-bisphosphate + keratan 6'-sulfate.. Its function is as follows. Sulfotransferase that utilizes 3'-phospho-5'-adenylyl sulfate (PAPS) as sulfonate donor to catalyze the transfer of sulfate to position 6 of the N-acetylgalactosamine (GalNAc) residue of chondroitin. Chondroitin sulfate constitutes the predominant proteoglycan present in cartilage and is distributed on the surfaces of many cells and extracellular matrices. Catalyzes with a lower efficiency the sulfation of Gal residues of keratan sulfate, another glycosaminoglycan. Can also catalyze the sulfation of the Gal residues in sialyl N-acetyllactosamine (sialyl LacNAc) oligosaccharides. May play a role in the maintenance of naive T-lymphocytes in the spleen. This is Carbohydrate sulfotransferase 3 (Chst3) from Mus musculus (Mouse).